Here is a 227-residue protein sequence, read N- to C-terminus: Enolase-phosphatase E1 (227 aa).

2 residues coordinate Mg(2+): Asp-11 and Glu-13. Residues 118–119 (SS) and Lys-161 each bind substrate. Residue Asp-186 participates in Mg(2+) binding.

This sequence belongs to the HAD-like hydrolase superfamily. MasA/MtnC family. In terms of assembly, monomer. Mg(2+) is required as a cofactor.

It is found in the cytoplasm. The protein localises to the nucleus. The enzyme catalyses 5-methylsulfanyl-2,3-dioxopentyl phosphate + H2O = 1,2-dihydroxy-5-(methylsulfanyl)pent-1-en-3-one + phosphate. Its pathway is amino-acid biosynthesis; L-methionine biosynthesis via salvage pathway; L-methionine from S-methyl-5-thio-alpha-D-ribose 1-phosphate: step 3/6. The protein operates within amino-acid biosynthesis; L-methionine biosynthesis via salvage pathway; L-methionine from S-methyl-5-thio-alpha-D-ribose 1-phosphate: step 4/6. In terms of biological role, bifunctional enzyme that catalyzes the enolization of 2,3-diketo-5-methylthiopentyl-1-phosphate (DK-MTP-1-P) into the intermediate 2-hydroxy-3-keto-5-methylthiopentenyl-1-phosphate (HK-MTPenyl-1-P), which is then dephosphorylated to form the acireductone 1,2-dihydroxy-3-keto-5-methylthiopentene (DHK-MTPene). The polypeptide is Enolase-phosphatase E1 (Saccharomyces cerevisiae (strain JAY291) (Baker's yeast)).